Consider the following 218-residue polypeptide: MDKSESTSAGRNRRRRLRRGSRSAPSSSDANFRVLSQQLSRLNKTLSAGRPTINHPTFVGTERCKPGYTFTSITSKPPKIDRGSYYGKRLLLPDSVTEYDKKLVSRIQIRVNPLPKFDSTVWVTVRKVPASSDLSVPAISAMFPDGPSPVLVYQYAASGVQANNKLLYDLSAMRADIGDMRKYAVLVYAKDDALATDELVLHVDVEHQRIPTSGVLPV.

The residue at position 1 (Met1) is an N-acetylmethionine; by host. The span at 1–10 (MDKSESTSAG) shows a compositional bias: low complexity. The disordered stretch occupies residues 1–30 (MDKSESTSAGRNRRRRLRRGSRSAPSSSDA). Residues 11-21 (RNRRRRLRRGS) are compositionally biased toward basic residues.

This sequence belongs to the cucumovirus capsid protein family.

It localises to the virion. Capsid protein. Probably binds RNA and plays a role in packaging. In Cucumber mosaic virus (strain Kor) (CMV), this protein is Capsid protein.